The primary structure comprises 89 residues: Small ribosomal subunit protein uS14 (89 aa).

The protein belongs to the universal ribosomal protein uS14 family. Part of the 30S ribosomal subunit. Contacts proteins S3 and S10.

Its function is as follows. Binds 16S rRNA, required for the assembly of 30S particles and may also be responsible for determining the conformation of the 16S rRNA at the A site. The protein is Small ribosomal subunit protein uS14 of Chlorobaculum tepidum (strain ATCC 49652 / DSM 12025 / NBRC 103806 / TLS) (Chlorobium tepidum).